Reading from the N-terminus, the 268-residue chain is Tryptophan synthase alpha chain (268 aa).

Residues Glu-49 and Asp-60 each act as proton acceptor in the active site.

It belongs to the TrpA family. Tetramer of two alpha and two beta chains.

It catalyses the reaction (1S,2R)-1-C-(indol-3-yl)glycerol 3-phosphate + L-serine = D-glyceraldehyde 3-phosphate + L-tryptophan + H2O. It functions in the pathway amino-acid biosynthesis; L-tryptophan biosynthesis; L-tryptophan from chorismate: step 5/5. The alpha subunit is responsible for the aldol cleavage of indoleglycerol phosphate to indole and glyceraldehyde 3-phosphate. In Escherichia fergusonii (strain ATCC 35469 / DSM 13698 / CCUG 18766 / IAM 14443 / JCM 21226 / LMG 7866 / NBRC 102419 / NCTC 12128 / CDC 0568-73), this protein is Tryptophan synthase alpha chain.